Reading from the N-terminus, the 382-residue chain is Mannitol-1-phosphate 5-dehydrogenase (382 aa).

3–14 (ALHFGAGNIGRG) serves as a coordination point for NAD(+). An N6-acetyllysine modification is found at lysine 269.

The protein belongs to the mannitol dehydrogenase family. Monomer.

The enzyme catalyses D-mannitol 1-phosphate + NAD(+) = beta-D-fructose 6-phosphate + NADH + H(+). This chain is Mannitol-1-phosphate 5-dehydrogenase, found in Escherichia coli O157:H7.